The sequence spans 189 residues: Mu-like prophage FluMu protein gp27 (189 aa).

The protein to phage Mu protein gp27.

This chain is Mu-like prophage FluMu protein gp27, found in Haemophilus influenzae (strain ATCC 51907 / DSM 11121 / KW20 / Rd).